Here is a 139-residue protein sequence, read N- to C-terminus: Large-conductance mechanosensitive channel 1 (139 aa).

3 helical membrane passes run 8–28, 30–50, and 81–101; these read FISK…AAFG, IVDS…FGGL, and GSFI…FLMV.

Belongs to the MscL family. In terms of assembly, homopentamer.

It localises to the cell inner membrane. Channel that opens in response to stretch forces in the membrane lipid bilayer. May participate in the regulation of osmotic pressure changes within the cell. The sequence is that of Large-conductance mechanosensitive channel 1 from Mesorhizobium japonicum (strain LMG 29417 / CECT 9101 / MAFF 303099) (Mesorhizobium loti (strain MAFF 303099)).